Here is a 24-residue protein sequence, read N- to C-terminus: Ascaphin-4 (24 aa).

In terms of tissue distribution, expressed by the skin glands.

The protein resides in the secreted. In terms of biological role, antimicrobial peptide that shows higher potency against Gram-negative bacteria than against Gram-positive bacteria. Has a very week hemolytic activity. The chain is Ascaphin-4 from Ascaphus truei (Coastal tailed frog).